A 129-amino-acid chain; its full sequence is Transcription antitermination protein NusB (129 aa).

Belongs to the NusB family.

Functionally, involved in transcription antitermination. Required for transcription of ribosomal RNA (rRNA) genes. Binds specifically to the boxA antiterminator sequence of the ribosomal RNA (rrn) operons. The polypeptide is Transcription antitermination protein NusB (Staphylococcus aureus (strain USA300 / TCH1516)).